Here is a 648-residue protein sequence, read N- to C-terminus: Serine/threonine-protein phosphatase 1 regulatory subunit PIG1 (648 aa).

Residues 20 to 51 (STSSFVSSTTSNSFSPLEDSTSASSSTSSSSS) are compositionally biased toward low complexity. The tract at residues 20 to 52 (STSSFVSSTTSNSFSPLEDSTSASSSTSSSSSG) is disordered. The region spanning 201–331 (HSLELSDPVS…NNDYKNYEIT (131 aa)) is the CBM21 domain. Positions 593 to 609 (RESSSPEISPLNTTTSL) are enriched in polar residues. The interval 593–629 (RESSSPEISPLNTTTSLPFFPGDNMSDSSGEYEERTS) is disordered.

Functionally, regulates the activity of glycogen synthase. It is most probably a regulatory subunit for protein phosphatase type 1. The protein is Serine/threonine-protein phosphatase 1 regulatory subunit PIG1 (PIG1) of Saccharomyces cerevisiae (strain ATCC 204508 / S288c) (Baker's yeast).